The primary structure comprises 83 residues: Large ribosomal subunit protein bL27 (83 aa).

Residues 1-20 form a disordered region; that stretch reads MAHKKGASSSRNGRDSNPQY. Positions 7-19 are enriched in polar residues; sequence ASSSRNGRDSNPQ.

The protein belongs to the bacterial ribosomal protein bL27 family.

In Bifidobacterium animalis subsp. lactis (strain AD011), this protein is Large ribosomal subunit protein bL27.